The following is a 510-amino-acid chain: ATP synthase subunit alpha (510 aa).

169–176 (GDRQTGKT) contacts ATP.

This sequence belongs to the ATPase alpha/beta chains family. F-type ATPases have 2 components, CF(1) - the catalytic core - and CF(0) - the membrane proton channel. CF(1) has five subunits: alpha(3), beta(3), gamma(1), delta(1), epsilon(1). CF(0) has three main subunits: a(1), b(2) and c(9-12). The alpha and beta chains form an alternating ring which encloses part of the gamma chain. CF(1) is attached to CF(0) by a central stalk formed by the gamma and epsilon chains, while a peripheral stalk is formed by the delta and b chains.

Its subcellular location is the cell inner membrane. The catalysed reaction is ATP + H2O + 4 H(+)(in) = ADP + phosphate + 5 H(+)(out). In terms of biological role, produces ATP from ADP in the presence of a proton gradient across the membrane. The alpha chain is a regulatory subunit. This is ATP synthase subunit alpha from Rickettsia felis (strain ATCC VR-1525 / URRWXCal2) (Rickettsia azadi).